The sequence spans 66 residues: Large ribosomal subunit protein bL35 (66 aa).

The protein belongs to the bacterial ribosomal protein bL35 family.

The chain is Large ribosomal subunit protein bL35 from Synechococcus sp. (strain JA-2-3B'a(2-13)) (Cyanobacteria bacterium Yellowstone B-Prime).